The chain runs to 344 residues: 5,10-methenyltetrahydromethanopterin hydrogenase (344 aa).

Belongs to the HMD family. As to quaternary structure, homotetramer.

It carries out the reaction 5,10-methenyl-5,6,7,8-tetrahydromethanopterin + H2 = 5,10-methylenetetrahydromethanopterin + H(+). The protein operates within one-carbon metabolism; methanogenesis from CO(2); 5,10-methylene-5,6,7,8-tetrahydromethanopterin from 5,10-methenyl-5,6,7,8-tetrahydromethanopterin (hydrogen route): step 1/1. Activity requires salt; 100 mM sodium or potassium salts of chloride, phosphate or sulfate are equally effective. Inactivated by O(2). Catalyzes the reversible reduction of methenyl-H(4)MPT(+) to methylene-H(4)MPT. This is 5,10-methenyltetrahydromethanopterin hydrogenase from Methanothermobacter marburgensis (strain ATCC BAA-927 / DSM 2133 / JCM 14651 / NBRC 100331 / OCM 82 / Marburg) (Methanobacterium thermoautotrophicum).